The chain runs to 75 residues: Porwaprin-d (75 aa).

An N-terminal signal peptide occupies residues 1 to 24; the sequence is MSSGGLLLLLGLLTLWAELTPVSS. A WAP domain is found at 27-72; it reads RPKKPGLCPPRPQKPPCVRECKNDWRCPGEQKCCRYGCIYECRDPI. 4 disulfide bridges follow: C34–C60, C43–C64, C47–C59, and C53–C68.

This sequence belongs to the venom waprin family. As to expression, expressed by the venom gland.

It localises to the secreted. Its function is as follows. Damages membranes of susceptible bacteria. Has no hemolytic activity. Not toxic to mice. Does not inhibit the proteinases elastase and cathepsin G. This chain is Porwaprin-d, found in Pseudechis porphyriacus (Red-bellied black snake).